Here is a 477-residue protein sequence, read N- to C-terminus: Zinc metalloproteinase/disintegrin (477 aa).

The first 20 residues, 1 to 20, serve as a signal peptide directing secretion; the sequence is MIEVLLVTICLAAFPYQGSS. The propeptide occupies 21–187; that stretch reads IILESGNVND…PIKKASQSNL (167 aa). A Peptidase M12B domain is found at 193-389; the sequence is RYIELFLVVD…DNPQCILNKQ (197 aa). Residues E196 and D280 each coordinate Ca(2+). 3 cysteine pairs are disulfide-bonded: C304–C384, C344–C368, and C346–C351. H329 contacts Zn(2+). Residue E330 is part of the active site. Residues H333 and H339 each contribute to the Zn(2+) site. Positions 384 and 387 each coordinate Ca(2+). Positions 390-404 are excised as a propeptide; sequence LRTDTVSTPVSGKNF. The Disintegrin domain occupies 396–477; it reads STPVSGKNFG…AGCPRNPFHA (82 aa). 6 cysteine pairs are disulfide-bonded: C410-C425, C412-C420, C419-C442, C433-C439, C438-C463, and C451-C470. A Cell attachment site motif is present at residues 455-457; sequence RGD.

Belongs to the venom metalloproteinase (M12B) family. P-II subfamily. P-IIa sub-subfamily. Monomer. Zn(2+) serves as cofactor. Expressed by the venom gland.

It localises to the secreted. Its activity is regulated as follows. Inhibited by 1,10-phenanthroline and EDTA. In terms of biological role, impairs hemostasis in the envenomed animal. Does not exhibit detectable plasminogen activating activity. Has hemagglutinating activity on red blood cells. Cleaves insulin B chain at '38-Ala-|-Leu-39' and '40-Tyr-|-Leu-41' bonds. This recombinant protein shows high inhibitory activity on collagen-induced platelet aggregation. The chain is Zinc metalloproteinase/disintegrin from Bothrops jararaca (Jararaca).